Here is a 742-residue protein sequence, read N- to C-terminus: Phosphoribosylformylglycinamidine synthase subunit PurL (742 aa).

Histidine 54 is a catalytic residue. Residues tyrosine 57 and lysine 96 each coordinate ATP. Mg(2+) is bound at residue glutamate 98. Substrate is bound by residues 99 to 102 (SHNH) and arginine 121. Histidine 100 acts as the Proton acceptor in catalysis. A Mg(2+)-binding site is contributed by aspartate 122. A substrate-binding site is contributed by glutamine 245. Aspartate 273 is a binding site for Mg(2+). 317 to 319 (ESQ) contributes to the substrate binding site. Residues aspartate 500 and glycine 537 each coordinate ATP. Asparagine 538 provides a ligand contact to Mg(2+). Substrate is bound at residue serine 540.

The protein belongs to the FGAMS family. Monomer. Part of the FGAM synthase complex composed of 1 PurL, 1 PurQ and 2 PurS subunits.

The protein resides in the cytoplasm. It catalyses the reaction N(2)-formyl-N(1)-(5-phospho-beta-D-ribosyl)glycinamide + L-glutamine + ATP + H2O = 2-formamido-N(1)-(5-O-phospho-beta-D-ribosyl)acetamidine + L-glutamate + ADP + phosphate + H(+). The protein operates within purine metabolism; IMP biosynthesis via de novo pathway; 5-amino-1-(5-phospho-D-ribosyl)imidazole from N(2)-formyl-N(1)-(5-phospho-D-ribosyl)glycinamide: step 1/2. Its function is as follows. Part of the phosphoribosylformylglycinamidine synthase complex involved in the purines biosynthetic pathway. Catalyzes the ATP-dependent conversion of formylglycinamide ribonucleotide (FGAR) and glutamine to yield formylglycinamidine ribonucleotide (FGAM) and glutamate. The FGAM synthase complex is composed of three subunits. PurQ produces an ammonia molecule by converting glutamine to glutamate. PurL transfers the ammonia molecule to FGAR to form FGAM in an ATP-dependent manner. PurS interacts with PurQ and PurL and is thought to assist in the transfer of the ammonia molecule from PurQ to PurL. The chain is Phosphoribosylformylglycinamidine synthase subunit PurL from Bacillus velezensis (strain DSM 23117 / BGSC 10A6 / LMG 26770 / FZB42) (Bacillus amyloliquefaciens subsp. plantarum).